The following is a 149-amino-acid chain: D-aminoacyl-tRNA deacylase (149 aa).

Residues 137 to 138 (GP) carry the Gly-cisPro motif, important for rejection of L-amino acids motif.

This sequence belongs to the DTD family. In terms of assembly, homodimer.

The protein resides in the cytoplasm. It catalyses the reaction glycyl-tRNA(Ala) + H2O = tRNA(Ala) + glycine + H(+). It carries out the reaction a D-aminoacyl-tRNA + H2O = a tRNA + a D-alpha-amino acid + H(+). Functionally, an aminoacyl-tRNA editing enzyme that deacylates mischarged D-aminoacyl-tRNAs. Also deacylates mischarged glycyl-tRNA(Ala), protecting cells against glycine mischarging by AlaRS. Acts via tRNA-based rather than protein-based catalysis; rejects L-amino acids rather than detecting D-amino acids in the active site. By recycling D-aminoacyl-tRNA to D-amino acids and free tRNA molecules, this enzyme counteracts the toxicity associated with the formation of D-aminoacyl-tRNA entities in vivo and helps enforce protein L-homochirality. The sequence is that of D-aminoacyl-tRNA deacylase from Thermoanaerobacter sp. (strain X514).